A 650-amino-acid chain; its full sequence is Chaperone protein DnaK (650 aa).

A Phosphothreonine; by autocatalysis modification is found at T200. Residues G612–Q632 are compositionally biased toward low complexity. The tract at residues G612–K650 is disordered. Over residues A641 to K650 the composition is skewed to basic and acidic residues.

Belongs to the heat shock protein 70 family.

Its function is as follows. Acts as a chaperone. This is Chaperone protein DnaK from Cupriavidus necator (strain ATCC 17699 / DSM 428 / KCTC 22496 / NCIMB 10442 / H16 / Stanier 337) (Ralstonia eutropha).